The following is a 327-amino-acid chain: Small ribosomal subunit protein RACK1 (327 aa).

7 WD repeats span residues 13–44 (AHTD…IVWK), 61–91 (GHSH…RLWD), 103–133 (GHTK…KLWN), 148–180 (GHRD…KVWN), 192–222 (GHTG…LLWD), 233–262 (EANS…KIWD), and 293–323 (RKVI…RVWG).

Belongs to the WD repeat G protein beta family. Ribosomal protein RACK1 subfamily.

The protein is Small ribosomal subunit protein RACK1 (GB1) of Brassica napus (Rape).